Here is a 1488-residue protein sequence, read N- to C-terminus: DNA polymerase alpha catalytic subunit (1488 aa).

Disordered stretches follow at residues 1 to 22 (MSESPSEPRAKRQRVDKNGRFA), 79 to 124 (LRDF…TGKA), and 236 to 325 (FFSS…ESED). Over residues 83–93 (FEDEDEYSDGE) the composition is skewed to acidic residues. The short motif at 96–103 (RKDSKKKK) is the Nuclear localization signal element. The segment covering 99 to 113 (SKKKKGVAPNSKKRP) has biased composition (basic residues). Ser-239 bears the Phosphoserine mark. Over residues 242–258 (IKKEPMPEKTPAKKATE) the composition is skewed to basic and acidic residues. Over residues 260–278 (PFSDNEMDFSCLDDDENQF) the composition is skewed to acidic residues. Phosphoserine is present on residues Ser-262 and Ser-269. The segment covering 286–303 (TEKVSQTKTAAEKTSQSK) has biased composition (polar residues). Residues 304–325 (VAEKSAPKKETTGSPKESESED) show a composition bias toward basic and acidic residues. Residue Thr-314 is modified to Phosphothreonine. Ser-317 carries the post-translational modification Phosphoserine. The contains conserved residues essential for 3' -&gt; 5' exonuclease activities stretch occupies residues 638–758 (DSERALLSWF…DLLEMYEKGE (121 aa)). DNA-binding stretches follow at residues 675-734 (QIVA…CKQV) and 1255-1380 (PTKF…RKKS). Cys-1296, Cys-1299, Cys-1324, Cys-1329, Cys-1362, Cys-1367, Cys-1385, and Cys-1388 together coordinate Zn(2+). Residues 1296–1327 (CVTCKTEQLMASAYRPGPSNSHIAVLQQCAKS) form a CysA-type zinc finger. A CysB motif motif is present at residues 1362–1388 (CDHPDCNFNTRTHSLRKKSHRPLCQKC).

Belongs to the DNA polymerase type-B family. As to quaternary structure, component of the alpha DNA polymerase complex (also known as the alpha DNA polymerase-primase complex) consisting of four subunits: the catalytic subunit PolA1, the regulatory subunit PolA2, and the primase complex subunits Prim1 and Prim2 respectively. PolA1 associates with the DNA primase complex before association with PolA2. Interacts with Dpit47; the interaction inhibits the activity of the DNA polymerase and occurs only in proliferating cells but not in quiescent cells. In terms of processing, in embryos, a cleaved form of 130 kDa is produced up to cycle 14 and then disappears. As to expression, expressed in embryos (at protein level).

It is found in the nucleus. It carries out the reaction DNA(n) + a 2'-deoxyribonucleoside 5'-triphosphate = DNA(n+1) + diphosphate. Its activity is regulated as follows. Inhibited by N2-(p-n-butylphenyl) deoxyguanosine 5'-triphosphate and N2-(p-n-butylphenyl) deoxyadenosine 5'-triphosphate. DNA synthesis is not inhibited by fungal toxin alpha-amaitin. The 3'-5' exonuclease activity is inhibited by 10mM dGMP. Functionally, catalytic subunit of the DNA polymerase alpha complex (also known as the alpha DNA polymerase-primase complex) which plays an essential role in the initiation of DNA synthesis. During the S phase of the cell cycle, the DNA polymerase alpha complex (composed of a catalytic subunit PolA1, an accessory subunit PolA2 and two primase subunits, the catalytic subunit Prim1 and the regulatory subunit Prim2) is recruited to DNA at the replicative forks. The primase subunit of the polymerase alpha complex initiates DNA synthesis by oligomerising short RNA primers on both leading and lagging strands. These primers are initially extended by the polymerase alpha catalytic subunit and subsequently transferred to polymerase delta and polymerase epsilon for processive synthesis on the lagging and leading strand, respectively. In addition to polymerase activity, exhibits 3' to 5' exonuclease activity. This Drosophila melanogaster (Fruit fly) protein is DNA polymerase alpha catalytic subunit.